We begin with the raw amino-acid sequence, 400 residues long: Glycerol-3-phosphate dehydrogenase [NAD(+)] 1 (400 aa).

NAD(+)-binding positions include 50–55, Phe138, Lys161, and Ala194; that span reads GSGNWG. Lys161 contributes to the substrate binding site. The Proton acceptor role is filled by Lys254. The NAD(+) site is built by Arg319 and Gln348. 319–320 contacts substrate; the sequence is RN.

The protein belongs to the NAD-dependent glycerol-3-phosphate dehydrogenase family.

The enzyme catalyses sn-glycerol 3-phosphate + NAD(+) = dihydroxyacetone phosphate + NADH + H(+). The protein is Glycerol-3-phosphate dehydrogenase [NAD(+)] 1 (GPD1) of Candida glabrata (strain ATCC 2001 / BCRC 20586 / JCM 3761 / NBRC 0622 / NRRL Y-65 / CBS 138) (Yeast).